Consider the following 524-residue polypeptide: Lysophospholipid acyltransferase LPCAT4 (524 aa).

Helical transmembrane passes span 40–62 (CLLG…FLLW) and 87–107 (TVCH…LGFL). Positions 129–134 (HSTFFD) match the HXXXXD motif motif. N-linked (GlcNAc...) asparagine glycosylation is present at asparagine 152. Residues 489-524 (PPHTSRGTSQTPNASSPGNPTALANGTVQAPKQKGD) are disordered. A compositionally biased stretch (polar residues) spans 493–518 (SRGTSQTPNASSPGNPTALANGTVQA).

The protein belongs to the 1-acyl-sn-glycerol-3-phosphate acyltransferase family. In terms of tissue distribution, widely expressed with predominant level in brain.

Its subcellular location is the endoplasmic reticulum membrane. The enzyme catalyses a 1-acyl-sn-glycero-3-phosphoethanolamine + an acyl-CoA = a 1,2-diacyl-sn-glycero-3-phosphoethanolamine + CoA. It carries out the reaction a 1-O-(1Z-alkenyl)-sn-glycero-3-phosphoethanolamine + an acyl-CoA = a 1-O-(1Z-alkenyl)-2-acyl-sn-glycero-3-phosphoethanolamine + CoA. The catalysed reaction is a 1-acyl-sn-glycero-3-phosphocholine + an acyl-CoA = a 1,2-diacyl-sn-glycero-3-phosphocholine + CoA. It catalyses the reaction a 1-O-alkyl-sn-glycero-3-phosphocholine + acetyl-CoA = a 1-O-alkyl-2-acetyl-sn-glycero-3-phosphocholine + CoA. The enzyme catalyses a 1-acyl-sn-glycero-3-phospho-L-serine + an acyl-CoA = a 1,2-diacyl-sn-glycero-3-phospho-L-serine + CoA. It carries out the reaction octanoyl-CoA + a 1-acyl-sn-glycero-3-phosphoethanolamine = 1-acyl-2-octanoyl-sn-glycero-3-phosphoethanolamine + CoA. The catalysed reaction is a 1-acyl-sn-glycero-3-phosphoethanolamine + hexadecanoyl-CoA = 1-acyl-2-hexadecanoyl-sn-glycero-3-phosphoethanolamine + CoA. It catalyses the reaction a 1-acyl-sn-glycero-3-phosphoethanolamine + octadecanoyl-CoA = 1-acyl-2-octadecanoyl-sn-glycero-3-phosphoethanolamine + CoA. The enzyme catalyses a 1-acyl-sn-glycero-3-phosphoethanolamine + (9Z)-octadecenoyl-CoA = 1-acyl-2-(9Z)-octadecenoyl-sn-glycero-3-phosphoethanolamine + CoA. It carries out the reaction a 1-acyl-sn-glycero-3-phosphoethanolamine + (5Z,8Z,11Z,14Z)-eicosatetraenoyl-CoA = 1-acyl-2-(5Z,8Z,11Z,14Z)-eicosatetraenoyl-sn-glycero-3-phosphoethanolamine + CoA. The catalysed reaction is a 1-O-(1Z-alkenyl)-sn-glycero-3-phosphoethanolamine + octanoyl-CoA = 1-O-(1Z)-alkenyl-2-octanoyl-sn-glycero-3-phosphoethanolamine + CoA. It catalyses the reaction a 1-O-(1Z-alkenyl)-sn-glycero-3-phosphoethanolamine + hexadecanoyl-CoA = 1-O-(1Z)-alkenyl-2-hexadecanoyl-sn-glycero-3-phosphoethanolamine + CoA. The enzyme catalyses a 1-O-(1Z-alkenyl)-sn-glycero-3-phosphoethanolamine + octadecanoyl-CoA = 1-O-(1Z)-alkenyl-2-octadecanoyl-sn-glycero-3-phosphoethanolamine + CoA. It carries out the reaction a 1-O-(1Z-alkenyl)-sn-glycero-3-phosphoethanolamine + (9Z)-octadecenoyl-CoA = 1-O-(1Z)-alkenyl-2-(9Z)-octadecenoyl-sn-glycero-3-phosphoethanolamine + CoA. The catalysed reaction is a 1-O-(1Z-alkenyl)-sn-glycero-3-phosphoethanolamine + (5Z,8Z,11Z,14Z)-eicosatetraenoyl-CoA = 1-O-(1Z)-alkenyl-2-(5Z,8Z,11Z,14Z)-eicosatetraenoyl-sn-glycero-3-phosphoethanolamine + CoA. It catalyses the reaction a 1-acyl-sn-glycero-3-phosphocholine + hexadecanoyl-CoA = 1-acyl-2-hexadecanoyl-sn-glycero-3-phosphocholine + CoA. The enzyme catalyses a 1-acyl-sn-glycero-3-phosphocholine + (9Z)-octadecenoyl-CoA = a 1-acyl-2-(9Z)-octadecenoyl-sn-glycero-3-phosphocholine + CoA. It carries out the reaction 1-O-hexadecyl-sn-glycero-3-phosphocholine + (9Z)-octadecenoyl-CoA = 1-O-hexadecyl-2-(9Z)-octadecenoyl-sn-glycero-3-phosphocholine + CoA. The catalysed reaction is 1-O-hexadecyl-sn-glycero-3-phosphocholine + (5Z,8Z,11Z,14Z)-eicosatetraenoyl-CoA = 1-O-hexadecyl-2-(5Z,8Z,11Z,14Z)-eicosatetraenoyl-sn-glycero-3-phosphocholine + CoA. It catalyses the reaction 1-hexadecanoyl-sn-glycero-3-phospho-L-serine + (9Z)-octadecenoyl-CoA = 1-hexadecanoyl-2-(9Z-octadecenoyl)-sn-glycero-3-phospho-L-serine + CoA. The enzyme catalyses 1-octadecanoyl-sn-glycero-3-phospho-(1'-sn-glycerol) + (9Z)-octadecenoyl-CoA = 1-octadecanoyl-2-(9Z-octadecenoyl)-sn-glycero-3-phospho-(1'-sn-glycerol) + CoA. It carries out the reaction 1-octadecanoyl-sn-glycero-3-phospho-(1'-sn-glycerol) + (5Z,8Z,11Z,14Z)-eicosatetraenoyl-CoA = 1-octadecanoyl-2-(5Z,8Z,11Z,14Z-eicosatetraenoyl)-sn-glycero-3-phospho-(1'-sn-glycerol) + CoA. It functions in the pathway lipid metabolism; phospholipid metabolism. Displays acyl-CoA-dependent lysophospholipid acyltransferase activity with a subset of lysophospholipids as substrates; converts lysophosphatidylethanolamine to phosphatidylethanolamine, lysophosphatidylcholine to phosphatidycholine, 1-alkenyl-lysophatidylethanolamine to 1-alkenyl-phosphatidylethanolamine, lysophosphatidylglycerol and alkyl-lysophosphatidylcholine to phosphatidylglycerol and alkyl-phosphatidylcholine, respectively. In contrast, has no lysophosphatidylinositol, glycerol-3-phosphate, diacylglycerol or lysophosphatidic acid acyltransferase activity. Prefers long chain acyl-CoAs (C16, C18) as acyl donors. This chain is Lysophospholipid acyltransferase LPCAT4 (LPCAT4), found in Homo sapiens (Human).